The primary structure comprises 346 residues: Holliday junction branch migration complex subunit RuvB (346 aa).

Residues 1–182 (MTRVISGEPQ…FGIPIRLEFY (182 aa)) form a large ATPase domain (RuvB-L) region. ATP-binding residues include Leu-21, Arg-22, Gly-63, Lys-66, Thr-67, Thr-68, Arg-172, Tyr-182, and Arg-219. A Mg(2+)-binding site is contributed by Thr-67. The segment at 183–253 (TPAELRHVLQ…AAAMALARLE (71 aa)) is small ATPAse domain (RuvB-S). A head domain (RuvB-H) region spans residues 256 to 346 (ESGLDSLDRR…QAQGALFDEG (91 aa)). DNA-binding residues include Arg-292, Arg-311, and Arg-316.

It belongs to the RuvB family. Homohexamer. Forms an RuvA(8)-RuvB(12)-Holliday junction (HJ) complex. HJ DNA is sandwiched between 2 RuvA tetramers; dsDNA enters through RuvA and exits via RuvB. An RuvB hexamer assembles on each DNA strand where it exits the tetramer. Each RuvB hexamer is contacted by two RuvA subunits (via domain III) on 2 adjacent RuvB subunits; this complex drives branch migration. In the full resolvosome a probable DNA-RuvA(4)-RuvB(12)-RuvC(2) complex forms which resolves the HJ.

The protein localises to the cytoplasm. It catalyses the reaction ATP + H2O = ADP + phosphate + H(+). In terms of biological role, the RuvA-RuvB-RuvC complex processes Holliday junction (HJ) DNA during genetic recombination and DNA repair, while the RuvA-RuvB complex plays an important role in the rescue of blocked DNA replication forks via replication fork reversal (RFR). RuvA specifically binds to HJ cruciform DNA, conferring on it an open structure. The RuvB hexamer acts as an ATP-dependent pump, pulling dsDNA into and through the RuvAB complex. RuvB forms 2 homohexamers on either side of HJ DNA bound by 1 or 2 RuvA tetramers; 4 subunits per hexamer contact DNA at a time. Coordinated motions by a converter formed by DNA-disengaged RuvB subunits stimulates ATP hydrolysis and nucleotide exchange. Immobilization of the converter enables RuvB to convert the ATP-contained energy into a lever motion, pulling 2 nucleotides of DNA out of the RuvA tetramer per ATP hydrolyzed, thus driving DNA branch migration. The RuvB motors rotate together with the DNA substrate, which together with the progressing nucleotide cycle form the mechanistic basis for DNA recombination by continuous HJ branch migration. Branch migration allows RuvC to scan DNA until it finds its consensus sequence, where it cleaves and resolves cruciform DNA. The polypeptide is Holliday junction branch migration complex subunit RuvB (Caulobacter vibrioides (strain ATCC 19089 / CIP 103742 / CB 15) (Caulobacter crescentus)).